The following is a 1034-amino-acid chain: Glycine dehydrogenase (decarboxylating), mitochondrial (1034 aa).

The N-terminal 63 residues, 1–63 (MERARRLAML…LNGFGSQVRT (63 aa)), are a transit peptide targeting the mitochondrion. K770 bears the N6-(pyridoxal phosphate)lysine mark.

This sequence belongs to the GcvP family. In terms of assembly, homodimer. The glycine cleavage system is composed of four proteins: P, T, L and H. The cofactor is pyridoxal 5'-phosphate.

The protein localises to the mitochondrion. It catalyses the reaction N(6)-[(R)-lipoyl]-L-lysyl-[glycine-cleavage complex H protein] + glycine + H(+) = N(6)-[(R)-S(8)-aminomethyldihydrolipoyl]-L-lysyl-[glycine-cleavage complex H protein] + CO2. In terms of biological role, the glycine cleavage system catalyzes the degradation of glycine. The P protein binds the alpha-amino group of glycine through its pyridoxal phosphate cofactor; CO(2) is released and the remaining methylamine moiety is then transferred to the lipoamide cofactor of the H protein. The protein is Glycine dehydrogenase (decarboxylating), mitochondrial (GDCSP) of Flaveria anomala (Yellowtops).